The primary structure comprises 335 residues: ETS translocation variant 2 (335 aa).

2 disordered regions span residues 94 to 138 (DPWS…SWSH) and 201 to 220 (GHQS…SDRA). Residues 205 to 220 (PAFTTPSKSNKQSDRA) show a composition bias toward polar residues. The segment at residues 234–314 (IQLWQFLLEL…GGRKYTYRFG (81 aa)) is a DNA-binding region (ETS).

It belongs to the ETS family. Testis.

It localises to the nucleus. Its function is as follows. Binds to DNA sequences containing the consensus pentanucleotide 5'-CGGA[AT]-3'. In Mus musculus (Mouse), this protein is ETS translocation variant 2 (Etv2).